Reading from the N-terminus, the 128-residue chain is Large ribosomal subunit protein bL17 (128 aa).

The protein belongs to the bacterial ribosomal protein bL17 family. As to quaternary structure, part of the 50S ribosomal subunit. Contacts protein L32.

The protein is Large ribosomal subunit protein bL17 of Streptococcus thermophilus (strain ATCC BAA-250 / LMG 18311).